We begin with the raw amino-acid sequence, 26 residues long: Conotoxin Eb6.17 (26 aa).

Disulfide bonds link cysteine 7–cysteine 18 and cysteine 13–cysteine 25.

It belongs to the conotoxin O1 superfamily. As to expression, expressed by the venom duct.

The protein resides in the secreted. In Conus ebraeus (Hebrew cone), this protein is Conotoxin Eb6.17 (E1).